The primary structure comprises 235 residues: Probable transcriptional regulatory protein CFF8240_0424 (235 aa).

This sequence belongs to the TACO1 family.

The protein localises to the cytoplasm. In Campylobacter fetus subsp. fetus (strain 82-40), this protein is Probable transcriptional regulatory protein CFF8240_0424.